We begin with the raw amino-acid sequence, 323 residues long: Aquaporin-2 (323 aa).

3 helical membrane passes run 32-54, 74-96, and 103-123; these read FLAVFVLMVFTEGCSASAIFTHR, YVAGGVTGAFLNPAIAVAFSVLG, and CFCYMIAQYLGAFLASLAIYA. Positions 85–87 match the NPA 1 motif; the sequence is NPA. Residue Asn143 is glycosylated (N-linked (GlcNAc...) asparagine). 2 consecutive transmembrane segments (helical) span residues 161–181 and 193–213; these read GAFVDQVFGTALLIIVVLSMV and FPIAIGLLIVVLDISLAYNAG. The short motif at 217-219 is the NPA 2 element; it reads NPS. The helical transmembrane segment at 243–263 threads the bilayer; that stretch reads YTWFFVPVVGSHAGAIVGAVI. An N-linked (GlcNAc...) asparagine glycan is attached at Asn292.

Belongs to the MIP/aquaporin (TC 1.A.8) family.

It localises to the cell membrane. The enzyme catalyses H2O(in) = H2O(out). The catalysed reaction is glycerol(in) = glycerol(out). Its function is as follows. Aquaglyceroporin that may modulate the water content and osmolytes during anhydrobiosis. The sequence is that of Aquaporin-2 from Milnesium tardigradum (Water bear).